The following is an 873-amino-acid chain: Leucine--tRNA ligase (873 aa).

Positions 48 to 58 (PYPSGKLHMGH) match the 'HIGH' region motif. Residues 636–640 (KMSKS) carry the 'KMSKS' region motif. Position 639 (lysine 639) interacts with ATP.

The protein belongs to the class-I aminoacyl-tRNA synthetase family.

It localises to the cytoplasm. It carries out the reaction tRNA(Leu) + L-leucine + ATP = L-leucyl-tRNA(Leu) + AMP + diphosphate. This is Leucine--tRNA ligase from Cupriavidus pinatubonensis (strain JMP 134 / LMG 1197) (Cupriavidus necator (strain JMP 134)).